A 2128-amino-acid polypeptide reads, in one-letter code: Non-reducing polyketide synthase albA (2128 aa).

The interval 8-244 is N-terminal acylcarrier protein transacylase domain (SAT); sequence YLFGDQTSDI…VKAPIHGPYH (237 aa). The 432-residue stretch at 375–806 folds into the Ketosynthase family 3 (KS3) domain; sequence NSKIAIIGMS…GGNTALLLED (432 aa). Residues C547, H682, and H724 each act as for beta-ketoacyl synthase activity in the active site. A malonyl-CoA:ACP transacylase (MAT) domain region spans residues 912 to 1232; the sequence is FVFTGQGAQY…LASLHLAGID (321 aa). The active-site For acyl/malonyl transferase activity is S1001. Residues 1286–1425 form an N-terminal hotdog fold region; the sequence is HEYLTTAAQK…CTVRFFDCAA (140 aa). The region spanning 1286–1598 is the PKS/mFAS DH domain; sequence HEYLTTAAQK…FQALSRKILD (313 aa). Residues 1290 to 1603 are product template (PT) domain; sequence TTAAQKVIET…RKILDTVLPP (314 aa). Residue H1326 is the Proton acceptor; for dehydratase activity of the active site. Positions 1452 to 1598 are C-terminal hotdog fold; sequence DAHRLGRGMV…FQALSRKILD (147 aa). D1511 (proton donor; for dehydratase activity) is an active-site residue. The Carrier 1 domain occupies 1618-1695; that stretch reads PSAPSLVKRA…DFKQFLAPMS (78 aa). S1655 is subject to O-(pantetheine 4'-phosphoryl)serine. Residues 1695 to 1740 are disordered; it reads SQGEASDGSTSDPESSSSFNGGSSTDESSAGSPVSSPPNEKVTQVE. A compositionally biased stretch (low complexity) spans 1700-1723; it reads SDGSTSDPESSSSFNGGSSTDESS. Residues 1724–1740 are compositionally biased toward polar residues; that stretch reads AGSPVSSPPNEKVTQVE. The Carrier 2 domain maps to 1739-1816; that stretch reads VEQHATIKEI…DVEDALGLKP (78 aa). Residue S1776 is modified to O-(pantetheine 4'-phosphoryl)serine. A claisen cyclase domain region spans residues 1854–2126; the sequence is SPHPRSTSIL…ELGSFIGNAM (273 aa). S1944 acts as the For Claisen cyclase activity in catalysis.

The enzyme catalyses 6 malonyl-CoA + acetyl-CoA + 6 H(+) = naphtopyrone YWA1 + 6 CO2 + 7 CoA + H2O. It participates in secondary metabolite biosynthesis. Non-reducing polyketide synthase; part of the gene cluster that mediates the biosynthesis of aurasperone B, a dimeric gamma-naphthopyrone. The first step in the biosynthesis of aurasperone B is the production of gamma-naphthopyrone precursor YWA1 by the non-reducing polyketide synthase albA, via condensation of one acetyl-CoA starter unit with 6 malonyl-CoA units. YWA1 is then methylated by aunE at position C-6 to yield foncesin which is further methylated at position C-8 by aunD to produce fonsecin B. A key enzyme in the biosynthetic pathway is the cytochrome P450 monooxygenase aunB which catalyzes the oxidative dimerization of fonsecin B to aurasperone B. AunB also catalyzes the oxidative dimerization of rubrofusarin B into aurasperone A. The chain is Non-reducing polyketide synthase albA from Aspergillus niger (strain ATCC 1015 / CBS 113.46 / FGSC A1144 / LSHB Ac4 / NCTC 3858a / NRRL 328 / USDA 3528.7).